A 526-amino-acid polypeptide reads, in one-letter code: Probable DNA ligase (526 aa).

Glu228 is an ATP binding site. Lys230 (N6-AMP-lysine intermediate) is an active-site residue. ATP is bound by residues Arg235, Arg250, Glu279, Phe319, Arg391, and Lys397.

This sequence belongs to the ATP-dependent DNA ligase family. It depends on Mg(2+) as a cofactor.

The enzyme catalyses ATP + (deoxyribonucleotide)n-3'-hydroxyl + 5'-phospho-(deoxyribonucleotide)m = (deoxyribonucleotide)n+m + AMP + diphosphate.. Functionally, DNA ligase that seals nicks in double-stranded DNA during DNA replication, DNA recombination and DNA repair. In Mycobacterium avium (strain 104), this protein is Probable DNA ligase.